Here is a 382-residue protein sequence, read N- to C-terminus: Neuropeptide Y receptor type 1 (382 aa).

At Met1–His33 the chain is on the extracellular side. Asn2, Asn11, and Asn17 each carry an N-linked (GlcNAc...) asparagine glycan. A helical transmembrane segment spans residues Leu34–Val54. The Cytoplasmic segment spans residues Thr55 to Asn75. A helical transmembrane segment spans residues Ile76–Thr96. Residues Phe97 to Asn115 are Extracellular-facing. A disulfide bridge connects residues Cys112 and Cys197. The chain crosses the membrane as a helical span at residues Pro116–Glu136. Residues Arg137 to His153 lie on the Cytoplasmic side of the membrane. The helical transmembrane segment at Ala154–Ile174 threads the bilayer. Topologically, residues Tyr175–Tyr210 are extracellular. N-linked (GlcNAc...) asparagine glycosylation is present at Asn185. A helical transmembrane segment spans residues Thr211 to Phe231. Residues Lys232–Arg259 lie on the Cytoplasmic side of the membrane. A helical transmembrane segment spans residues Ile260 to Ile280. Over Phe281 to Asn298 the chain is Extracellular. A helical transmembrane segment spans residues Leu299–Tyr319. Topologically, residues Gly320 to Ile382 are cytoplasmic. Cys337 carries S-palmitoyl cysteine lipidation. Residue Ser367 is modified to Phosphoserine.

The protein belongs to the G-protein coupled receptor 1 family.

The protein resides in the cell membrane. Functionally, receptor for neuropeptide Y and peptide YY. The sequence is that of Neuropeptide Y receptor type 1 (NPY1R) from Canis lupus familiaris (Dog).